The primary structure comprises 148 residues: Probable glucosamine 6-phosphate N-acetyltransferase (148 aa).

One can recognise an N-acetyltransferase domain in the interval 3-148 (ISINELNFDD…KQMALYLNGK (146 aa)). Substrate contacts are provided by residues Thr-25, 72-75 (KFIH), and 84-86 (EDV). Acetyl-CoA contacts are provided by residues 86–88 (VVV) and 94–99 (LHGIGK). Substrate contacts are provided by residues 115–116 (YK) and Asp-120. An acetyl-CoA-binding site is contributed by 129-131 (YCK). Glu-138 is a substrate binding site.

This sequence belongs to the acetyltransferase family. GNA1 subfamily.

It catalyses the reaction D-glucosamine 6-phosphate + acetyl-CoA = N-acetyl-D-glucosamine 6-phosphate + CoA + H(+). It participates in nucleotide-sugar biosynthesis; UDP-N-acetyl-alpha-D-glucosamine biosynthesis; N-acetyl-alpha-D-glucosamine 1-phosphate from alpha-D-glucosamine 6-phosphate (route I): step 1/2. This Acanthamoeba polyphaga (Amoeba) protein is Probable glucosamine 6-phosphate N-acetyltransferase.